The following is a 351-amino-acid chain: Magnesium-protoporphyrin IX monomethyl ester [oxidative] cyclase 1 (351 aa).

This sequence belongs to the AcsF family. Requires Fe cation as cofactor.

The catalysed reaction is Mg-protoporphyrin IX 13-monomethyl ester + 3 NADPH + 3 O2 + 2 H(+) = 3,8-divinyl protochlorophyllide a + 3 NADP(+) + 5 H2O. It participates in porphyrin-containing compound metabolism; chlorophyll biosynthesis (light-independent). Catalyzes the formation of the isocyclic ring in chlorophyll biosynthesis. Mediates the cyclase reaction, which results in the formation of divinylprotochlorophyllide (Pchlide) characteristic of all chlorophylls from magnesium-protoporphyrin IX 13-monomethyl ester (MgPMME). The chain is Magnesium-protoporphyrin IX monomethyl ester [oxidative] cyclase 1 from Nostoc sp. (strain PCC 7120 / SAG 25.82 / UTEX 2576).